A 361-amino-acid chain; its full sequence is Phospho-N-acetylmuramoyl-pentapeptide-transferase (361 aa).

10 consecutive transmembrane segments (helical) span residues 25–45, 73–93, 98–118, 139–159, 168–188, 200–220, 237–257, 264–284, 289–309, and 339–359; these read RGILAALTALFLSLWMGPAVI, TMGGSLILLTVTLSVLLWGDL, VWLVLAVMICFGAIGWYDDWI, IFGLAAGLFLYYTADVPAAIT, IALPLAGVSFVVIAYFWIVGF, GLAIMPTVLVACALGVFAYAS, AGELIIICSAIAGAGLGFLWF, VFMGDIGALSLGAVLGTVAVI, LVLVIMGGVFVIETLSVMIQV, and VIVRFWIISVVLVLIGLATLK.

Belongs to the glycosyltransferase 4 family. MraY subfamily. Mg(2+) is required as a cofactor.

It is found in the cell inner membrane. It carries out the reaction UDP-N-acetyl-alpha-D-muramoyl-L-alanyl-gamma-D-glutamyl-meso-2,6-diaminopimeloyl-D-alanyl-D-alanine + di-trans,octa-cis-undecaprenyl phosphate = di-trans,octa-cis-undecaprenyl diphospho-N-acetyl-alpha-D-muramoyl-L-alanyl-D-glutamyl-meso-2,6-diaminopimeloyl-D-alanyl-D-alanine + UMP. The protein operates within cell wall biogenesis; peptidoglycan biosynthesis. In terms of biological role, catalyzes the initial step of the lipid cycle reactions in the biosynthesis of the cell wall peptidoglycan: transfers peptidoglycan precursor phospho-MurNAc-pentapeptide from UDP-MurNAc-pentapeptide onto the lipid carrier undecaprenyl phosphate, yielding undecaprenyl-pyrophosphoryl-MurNAc-pentapeptide, known as lipid I. This Xanthomonas campestris pv. campestris (strain 8004) protein is Phospho-N-acetylmuramoyl-pentapeptide-transferase.